Reading from the N-terminus, the 365-residue chain is Transmembrane protein 25 (365 aa).

The signal sequence occupies residues 1 to 26 (MELPLSQATLRHTLLLLPALLSSGQG). Residues 27-232 (ELAPQIDGQT…APGLLATRIE (206 aa)) are Extracellular-facing. The Ig-like domain occupies 30–123 (PQIDGQTWAE…SGRPANASVI (94 aa)). A disulfide bond links C52 and C107. N-linked (GlcNAc...) asparagine glycosylation is found at N106, N162, N192, and N205. The helical transmembrane segment at 233–253 (VPLLGIVVAGGLALGTLVGFS) threads the bilayer. Topologically, residues 254–365 (TLVACLVCRK…SSVSSDEIWL (112 aa)) are cytoplasmic.

Interacts with GRIN2B. As to expression, expressed throughout the brain with higher levels within the hippocampus.

It is found in the late endosome. The protein localises to the lysosome. The protein resides in the cell membrane. It localises to the secreted. Its function is as follows. In neurons, modulates the degradation of NMDA receptor GRIN2B subunit. Plays a role in the regulation of neuronal excitability. This Mus musculus (Mouse) protein is Transmembrane protein 25.